We begin with the raw amino-acid sequence, 101 residues long: DET1- and DDB1-associated protein 1 (101 aa).

The segment at 67-101 (NAAKKRDQDQLEIGETSAPPRKIARTDSQEMSEDT) is disordered.

This sequence belongs to the DDA1 family. In terms of assembly, component of numerous DCX (DDB1-CUL4-X-box) E3 ubiquitin-protein ligase complexes which consist of a core of DDB1, cullin-4 (CUL4A or CUL4B), DDA1 and RBX1.

The protein operates within protein modification; protein ubiquitination. Functions as a component of numerous distinct DCX (DDB1-CUL4-X-box) E3 ubiquitin-protein ligase complexes which mediate the ubiquitination and subsequent proteasomal degradation of target proteins. In the DCX complexes, acts as a scaffolding subunit required to stabilize the complex. In Xenopus tropicalis (Western clawed frog), this protein is DET1- and DDB1-associated protein 1.